Reading from the N-terminus, the 257-residue chain is Protein orai-2 (257 aa).

Helical transmembrane passes span 67–84, 95–115, 149–169, and 199–219; these read TSALLSGFAMVAMVEVQL, LIAFSACTTVLVAVHLFALLI, LAWGFSTVLGILLFLAEVVLL, and AALVSTIIMVPVGLIFVVFTI.

The protein belongs to the Orai family.

The protein localises to the membrane. In terms of biological role, ca(2+) release-activated Ca(2+)-like (CRAC-like) channel subunit which mediates Ca(2+) influx and increase in Ca(2+)-selective current by synergy with the Ca(2+) sensor, STIM1. The polypeptide is Protein orai-2 (ORAI2) (Gallus gallus (Chicken)).